The following is a 332-amino-acid chain: Holliday junction branch migration complex subunit RuvB (332 aa).

The large ATPase domain (RuvB-L) stretch occupies residues 1–181 (MTRFLDSDAM…FGITGHMEYY (181 aa)). Residues L20, R21, G62, K65, T66, T67, 128 to 130 (EDF), R171, Y181, and R218 contribute to the ATP site. Residue T66 coordinates Mg(2+). The tract at residues 182-252 (EENDLTEIIE…ITDKALTMLD (71 aa)) is small ATPAse domain (RuvB-S). The tract at residues 255-332 (HEGLDYVDQK…EHLGYQRFDK (78 aa)) is head domain (RuvB-H). R291, R310, R312, and R315 together coordinate DNA.

It belongs to the RuvB family. As to quaternary structure, homohexamer. Forms an RuvA(8)-RuvB(12)-Holliday junction (HJ) complex. HJ DNA is sandwiched between 2 RuvA tetramers; dsDNA enters through RuvA and exits via RuvB. An RuvB hexamer assembles on each DNA strand where it exits the tetramer. Each RuvB hexamer is contacted by two RuvA subunits (via domain III) on 2 adjacent RuvB subunits; this complex drives branch migration. In the full resolvosome a probable DNA-RuvA(4)-RuvB(12)-RuvC(2) complex forms which resolves the HJ.

Its subcellular location is the cytoplasm. It catalyses the reaction ATP + H2O = ADP + phosphate + H(+). In terms of biological role, the RuvA-RuvB-RuvC complex processes Holliday junction (HJ) DNA during genetic recombination and DNA repair, while the RuvA-RuvB complex plays an important role in the rescue of blocked DNA replication forks via replication fork reversal (RFR). RuvA specifically binds to HJ cruciform DNA, conferring on it an open structure. The RuvB hexamer acts as an ATP-dependent pump, pulling dsDNA into and through the RuvAB complex. RuvB forms 2 homohexamers on either side of HJ DNA bound by 1 or 2 RuvA tetramers; 4 subunits per hexamer contact DNA at a time. Coordinated motions by a converter formed by DNA-disengaged RuvB subunits stimulates ATP hydrolysis and nucleotide exchange. Immobilization of the converter enables RuvB to convert the ATP-contained energy into a lever motion, pulling 2 nucleotides of DNA out of the RuvA tetramer per ATP hydrolyzed, thus driving DNA branch migration. The RuvB motors rotate together with the DNA substrate, which together with the progressing nucleotide cycle form the mechanistic basis for DNA recombination by continuous HJ branch migration. Branch migration allows RuvC to scan DNA until it finds its consensus sequence, where it cleaves and resolves cruciform DNA. This is Holliday junction branch migration complex subunit RuvB from Streptococcus agalactiae serotype V (strain ATCC BAA-611 / 2603 V/R).